The chain runs to 249 residues: Probable transcriptional regulatory protein LBL_2537 (249 aa).

The protein belongs to the TACO1 family.

It is found in the cytoplasm. The chain is Probable transcriptional regulatory protein LBL_2537 from Leptospira borgpetersenii serovar Hardjo-bovis (strain L550).